Here is a 458-residue protein sequence, read N- to C-terminus: tRNA modification GTPase MnmE (458 aa).

Residues Arg26, Glu88, and Arg127 each coordinate (6S)-5-formyl-5,6,7,8-tetrahydrofolate. Residues 224–378 form the TrmE-type G domain; the sequence is GLSTAIIGRP…IEDRINQLFF (155 aa). Asn234 contributes to the K(+) binding site. GTP contacts are provided by residues 234–239, 253–259, and 278–281; these read NVGKSS, TDIAGTT, and DTAG. Residue Ser238 participates in Mg(2+) binding. Residues Thr253, Ile255, and Thr258 each coordinate K(+). Thr259 contributes to the Mg(2+) binding site. Lys458 is a (6S)-5-formyl-5,6,7,8-tetrahydrofolate binding site.

It belongs to the TRAFAC class TrmE-Era-EngA-EngB-Septin-like GTPase superfamily. TrmE GTPase family. Homodimer. Heterotetramer of two MnmE and two MnmG subunits. Requires K(+) as cofactor.

It localises to the cytoplasm. In terms of biological role, exhibits a very high intrinsic GTPase hydrolysis rate. Involved in the addition of a carboxymethylaminomethyl (cmnm) group at the wobble position (U34) of certain tRNAs, forming tRNA-cmnm(5)s(2)U34. The chain is tRNA modification GTPase MnmE from Streptococcus pyogenes serotype M4 (strain MGAS10750).